Reading from the N-terminus, the 177-residue chain is Large ribosomal subunit protein uL6 (177 aa).

It belongs to the universal ribosomal protein uL6 family. As to quaternary structure, part of the 50S ribosomal subunit.

Its function is as follows. This protein binds to the 23S rRNA, and is important in its secondary structure. It is located near the subunit interface in the base of the L7/L12 stalk, and near the tRNA binding site of the peptidyltransferase center. The polypeptide is Large ribosomal subunit protein uL6 (Ruegeria pomeroyi (strain ATCC 700808 / DSM 15171 / DSS-3) (Silicibacter pomeroyi)).